A 324-amino-acid polypeptide reads, in one-letter code: tRNA U34 carboxymethyltransferase (324 aa).

Carboxy-S-adenosyl-L-methionine contacts are provided by residues Lys-92, Trp-106, Lys-111, Gly-131, Asp-153–Thr-155, Ile-182–Glu-183, Met-197, Tyr-201, and Arg-316.

It belongs to the class I-like SAM-binding methyltransferase superfamily. CmoB family. Homotetramer.

It catalyses the reaction carboxy-S-adenosyl-L-methionine + 5-hydroxyuridine(34) in tRNA = 5-carboxymethoxyuridine(34) in tRNA + S-adenosyl-L-homocysteine + H(+). Catalyzes carboxymethyl transfer from carboxy-S-adenosyl-L-methionine (Cx-SAM) to 5-hydroxyuridine (ho5U) to form 5-carboxymethoxyuridine (cmo5U) at position 34 in tRNAs. This chain is tRNA U34 carboxymethyltransferase, found in Proteus mirabilis (strain HI4320).